We begin with the raw amino-acid sequence, 260 residues long: Imidazole glycerol phosphate synthase subunit HisF (260 aa).

Residues aspartate 12 and aspartate 131 contribute to the active site.

It belongs to the HisA/HisF family. Heterodimer of HisH and HisF.

The protein resides in the cytoplasm. The enzyme catalyses 5-[(5-phospho-1-deoxy-D-ribulos-1-ylimino)methylamino]-1-(5-phospho-beta-D-ribosyl)imidazole-4-carboxamide + L-glutamine = D-erythro-1-(imidazol-4-yl)glycerol 3-phosphate + 5-amino-1-(5-phospho-beta-D-ribosyl)imidazole-4-carboxamide + L-glutamate + H(+). It participates in amino-acid biosynthesis; L-histidine biosynthesis; L-histidine from 5-phospho-alpha-D-ribose 1-diphosphate: step 5/9. In terms of biological role, IGPS catalyzes the conversion of PRFAR and glutamine to IGP, AICAR and glutamate. The HisF subunit catalyzes the cyclization activity that produces IGP and AICAR from PRFAR using the ammonia provided by the HisH subunit. The sequence is that of Imidazole glycerol phosphate synthase subunit HisF from Corynebacterium jeikeium (strain K411).